A 156-amino-acid polypeptide reads, in one-letter code: Small ribosomal subunit protein uS7c (156 aa).

This sequence belongs to the universal ribosomal protein uS7 family. In terms of assembly, part of the 30S ribosomal subunit.

Its subcellular location is the plastid. The protein localises to the chloroplast. One of the primary rRNA binding proteins, it binds directly to 16S rRNA where it nucleates assembly of the head domain of the 30S subunit. This chain is Small ribosomal subunit protein uS7c (rps7), found in Stangeria eriopus (Natal grass cycad).